The sequence spans 223 residues: UPF0502 protein Avin_04790 (223 aa).

This sequence belongs to the UPF0502 family.

The polypeptide is UPF0502 protein Avin_04790 (Azotobacter vinelandii (strain DJ / ATCC BAA-1303)).